The following is a 900-amino-acid chain: Phosphoenolpyruvate carboxylase (900 aa).

Catalysis depends on residues His140 and Lys568.

It belongs to the PEPCase type 1 family. The cofactor is Mg(2+).

The catalysed reaction is oxaloacetate + phosphate = phosphoenolpyruvate + hydrogencarbonate. Forms oxaloacetate, a four-carbon dicarboxylic acid source for the tricarboxylic acid cycle. In Neisseria gonorrhoeae (strain ATCC 700825 / FA 1090), this protein is Phosphoenolpyruvate carboxylase.